The chain runs to 202 residues: Homeobox protein ceh-13 (202 aa).

Disordered stretches follow at residues 60 to 83 and 166 to 202; these read PATA…LPTG and RMKE…KNFK. Residues 63–81 are compositionally biased toward low complexity; the sequence is ASGLSPPASRSSNSSAELP. The segment at residues 114 to 173 is a DNA-binding region (homeobox); that stretch reads NGTNRTNFTTHQLTELEKEFHTAKYVNRTRRTEIASNLKLQEAQVKIWFQNRRMKEKKRE. Residues 183–194 show a composition bias toward polar residues; the sequence is TWESNSPTSSCS.

It localises to the nucleus. The polypeptide is Homeobox protein ceh-13 (ceh-13) (Caenorhabditis elegans).